A 417-amino-acid polypeptide reads, in one-letter code: Serine/threonine-protein phosphatase 4 regulatory subunit 2 (417 aa).

Composition is skewed to polar residues over residues 140 to 149 (EKNNSSSLNR), 158 to 170 (NSPS…NING), and 186 to 196 (APMTTNGLPES). The tract at residues 140 to 417 (EKNNSSSLNR…EVTDEPMEQD (278 aa)) is disordered. Residue Ser-159 is modified to Phosphoserine. Residues 197–213 (TDSKEANLQQNEEKSHS) show a composition bias toward basic and acidic residues. The segment covering 214-226 (DSSTSESEVSSVS) has biased composition (low complexity). At Ser-226 the chain carries Phosphoserine. Residues 231–258 (KHPDEDAVEAEGHEVKRLRFDKEGEVRE) show a composition bias toward basic and acidic residues. Over residues 259–269 (TASQTTSSEIS) the composition is skewed to polar residues. Positions 283–297 (QDKDKDSRCTRQHCT) are enriched in basic and acidic residues. Positions 298 to 311 (EEDEEEDEEEEEES) are enriched in acidic residues. Basic and acidic residues predominate over residues 318-327 (MIPERKNQEK). Residues 338 to 350 (ETSEENNQMEESD) are compositionally biased toward acidic residues. A compositionally biased stretch (basic and acidic residues) spans 353 to 363 (QAEKDLLHSEG). Over residues 385–399 (GSNSSKTGEILSESS) the composition is skewed to polar residues. The segment covering 400–417 (MENDDEATEVTDEPMEQD) has biased composition (acidic residues).

Belongs to the PPP4R2 family. Serine/threonine-protein phosphatase 4 (PP4) occurs in different assemblies of the catalytic and one or more regulatory subunits. Component of the PP4 complexes PPP4C-PPP4R2, PPP4C-PPP4R2-PPP4R3A and PPP4C-PPP4R2-PPP4R3B. The PPP4C-PPP4R2 complex appears to be a tetramer composed of 2 molecules of PPP4C and 2 molecules of PPP4R2. Interacts with DDX20/GEMIN3 and GEMIN4. Interacts with RPA2; this DNA damage-dependent interaction recruits PPP4C leading to RPA2 dephosphorylation.

Its subcellular location is the cytoplasm. The protein localises to the cytoskeleton. It is found in the microtubule organizing center. It localises to the centrosome. The protein resides in the nucleus. In terms of biological role, regulatory subunit of serine/threonine-protein phosphatase 4 (PP4). May regulate the activity of PPP4C at centrosomal microtubule organizing centers. Its interaction with the SMN complex leads to enhance the temporal localization of snRNPs, suggesting a role of PPP4C in maturation of spliceosomal snRNPs. The PPP4C-PPP4R2-PPP4R3A PP4 complex specifically dephosphorylates H2AX phosphorylated on 'Ser-140' (gamma-H2AX) generated during DNA replication and required for DNA double strand break repair. Mediates RPA2 dephosphorylation by recruiting PPP4C to RPA2 in a DNA damage-dependent manner. RPA2 dephosphorylation is required for the efficient RPA2-mediated recruitment of RAD51 to chromatin following double strand breaks, an essential step for DNA repair. This is Serine/threonine-protein phosphatase 4 regulatory subunit 2 (PPP4R2) from Pongo abelii (Sumatran orangutan).